Reading from the N-terminus, the 1374-residue chain is DNA-directed RNA polymerase subunit beta (1374 aa).

The protein belongs to the RNA polymerase beta chain family. As to quaternary structure, the RNAP catalytic core consists of 2 alpha, 1 beta, 1 beta' and 1 omega subunit. When a sigma factor is associated with the core the holoenzyme is formed, which can initiate transcription.

The enzyme catalyses RNA(n) + a ribonucleoside 5'-triphosphate = RNA(n+1) + diphosphate. In terms of biological role, DNA-dependent RNA polymerase catalyzes the transcription of DNA into RNA using the four ribonucleoside triphosphates as substrates. The protein is DNA-directed RNA polymerase subunit beta of Methylobacterium nodulans (strain LMG 21967 / CNCM I-2342 / ORS 2060).